The chain runs to 100 residues: Urease subunit gamma (100 aa).

It belongs to the urease gamma subunit family. As to quaternary structure, heterotrimer of UreA (gamma), UreB (beta) and UreC (alpha) subunits. Three heterotrimers associate to form the active enzyme.

It localises to the cytoplasm. The enzyme catalyses urea + 2 H2O + H(+) = hydrogencarbonate + 2 NH4(+). It participates in nitrogen metabolism; urea degradation; CO(2) and NH(3) from urea (urease route): step 1/1. This is Urease subunit gamma from Pseudarthrobacter chlorophenolicus (strain ATCC 700700 / DSM 12829 / CIP 107037 / JCM 12360 / KCTC 9906 / NCIMB 13794 / A6) (Arthrobacter chlorophenolicus).